A 141-amino-acid chain; its full sequence is HTH-type transcriptional repressor NsrR (141 aa).

Residues 2-129 (QLTSFTDYGL…DSHTLADMVE (128 aa)) enclose the HTH rrf2-type domain. A DNA-binding region (H-T-H motif) is located at residues 28-51 (ISEVTEVYGVSRNHMVKIINQLSR). Residues C91, C96, and C102 each coordinate [2Fe-2S] cluster.

The cofactor is [2Fe-2S] cluster.

Nitric oxide-sensitive repressor of genes involved in protecting the cell against nitrosative stress. May require iron for activity. The protein is HTH-type transcriptional repressor NsrR of Serratia proteamaculans (strain 568).